Reading from the N-terminus, the 531-residue chain is UDP-glucuronosyltransferase 1A3 (531 aa).

Residues 1–25 (MGIQGFLQKLSGLLLLLCALPWAEG) form the signal peptide. 4 N-linked (GlcNAc...) asparagine glycosylation sites follow: Asn116, Asn139, Asn293, and Asn431. The chain crosses the membrane as a helical span at residues 489–505 (VIGFLLAIVLTVVFIVY).

This sequence belongs to the UDP-glycosyltransferase family. As to quaternary structure, homodimers. Homooligomer. Interacts with UGT1A1, UGT1A4, UGT1A6, UGT1A7, UGT1A8, UGT1A9 and UGT1A10 to form heterodimers.

The protein resides in the endoplasmic reticulum membrane. It carries out the reaction glucuronate acceptor + UDP-alpha-D-glucuronate = acceptor beta-D-glucuronoside + UDP + H(+). The enzyme catalyses 17beta-estradiol + UDP-alpha-D-glucuronate = 17beta-estradiol 3-O-(beta-D-glucuronate) + UDP + H(+). The catalysed reaction is 17beta-estradiol + UDP-alpha-D-glucuronate = 17beta-estradiol 17-O-(beta-D-glucuronate) + UDP + H(+). It catalyses the reaction 17alpha-estradiol + UDP-alpha-D-glucuronate = 17alpha-estradiol 3-O-(beta-D-glucuronate) + UDP + H(+). It carries out the reaction estrone + UDP-alpha-D-glucuronate = estrone 3-O-(beta-D-glucuronate) + UDP + H(+). The enzyme catalyses chenodeoxycholate + UDP-alpha-D-glucuronate = chenodeoxycholoyl-24-O-(beta-D-glucuronate) + UDP. The catalysed reaction is deoxycholate + UDP-alpha-D-glucuronate = deoxycholoyl-24-O-(beta-D-glucuronate) + UDP. It catalyses the reaction lithocholate + UDP-alpha-D-glucuronate = lithocholoyl-24-O-(beta-D-glucuronate) + UDP. It carries out the reaction hyodeoxycholate + UDP-alpha-D-glucuronate = hyodeoxycholoyl-24-O-(beta-D-glucuronate) + UDP. The enzyme catalyses hyocholate + UDP-alpha-D-glucuronate = hyocholoyl-24-O-(beta-D-glucuronate) + UDP. The catalysed reaction is calcidiol + UDP-alpha-D-glucuronate = calcidiol 25-O-(beta-D-glucuronide) + UDP + H(+). It catalyses the reaction losartan + UDP-alpha-D-glucuronate = losartan-2-N-beta-D-glucuronide + UDP. It carries out the reaction candesartan + UDP-alpha-D-glucuronate = candesartan-2-N-beta-D-glucuronide + UDP. The enzyme catalyses zolasartan + UDP-alpha-D-glucuronate = zolarsartan-2-N-beta-D-glucuronide + UDP. The catalysed reaction is (E)-ferulate + UDP-alpha-D-glucuronate = (E)-4-O-(beta-D-glucuronosyl)-ferulate + UDP + H(+). It catalyses the reaction (E)-ferulate + UDP-alpha-D-glucuronate = (E)-ferulic acid beta-D-glucuronate ester + UDP. Functionally, UDP-glucuronosyltransferase (UGT) that catalyzes phase II biotransformation reactions in which lipophilic substrates are conjugated with glucuronic acid to increase the metabolite's water solubility, thereby facilitating excretion into either the urine or bile. Essential for the elimination and detoxification of drugs, xenobiotics and endogenous compounds. Catalyzes the glucuronidation of endogenous estrogen hormones such as estradiol and estrone. Contributes to bile acid (BA) detoxification by catalyzing the glucuronidation of BA substrates, which are natural detergents for dietary lipids absorption. Involved in the glucuronidation of calcidiol, which is the major circulating form of vitamin D3, essential for the regulation of calcium and phosphate homeostasis. Involved in the glucuronidation of the phytochemical ferulic acid at the phenolic or the carboxylic acid group. Involved in the glucuronidation of the AGTR1 angiotensin receptor antagonists losartan, candesartan and zolarsartan, which can inhibit the effect of angiotensin II. This chain is UDP-glucuronosyltransferase 1A3, found in Rattus norvegicus (Rat).